An 875-amino-acid chain; its full sequence is Kelch-like protein 29 (875 aa).

Positions 113–126 (IRWGQTPVNQSTPW) are enriched in polar residues. Disordered stretches follow at residues 113–145 (IRWG…PGTG) and 240–291 (GVGQ…DSAH). Positions 131–140 (PPSKQMRESD) are enriched in basic and acidic residues. A compositionally biased stretch (low complexity) spans 270-280 (PSAALPSSVPA). Residues 329 to 401 (TDLKIVVEGR…VYTGSLVIDS (73 aa)) form the BTB domain. Kelch repeat units follow at residues 585-635 (VIVL…VSAG), 637-683 (NIYL…VYDG), 684-730 (KIYT…VCGG), 732-778 (IYVF…TLNG), 779-821 (FVFI…VLDG), and 822-870 (KIYA…VIKK).

The chain is Kelch-like protein 29 (Klhl29) from Mus musculus (Mouse).